Consider the following 225-residue polypeptide: Transcriptional activator protein CUP2 (225 aa).

A DNA-binding region (copper-fist) is located at residues 1 to 40; it reads MVVINGVKYACETCIRGHRAAQCTHTDGPLQMIRRKGRPS. A binds copper and DNA region spans residues 1–108; that stretch reads MVVINGVKYA…KSKGGSCHRR (108 aa). Zn(2+) contacts are provided by Cys-11, Cys-14, Cys-23, and His-25. The segment at 109–225 is required for transcriptional activation; sequence ANDEAAHVNG…QVSSHNSHSQ (117 aa).

The protein localises to the nucleus. In terms of biological role, trans-acting regulatory protein that activates transcription of the CUP1 gene (metallothionein) in response to copper ions. Binds to the CUP1 UAS sequence 5'-GCTTCTTTTCCGCTGA-3'. Binds DNA only in presence of copper or silver. Copper seems to alter the conformation of the protein. This chain is Transcriptional activator protein CUP2 (CUP2), found in Saccharomyces cerevisiae (strain ATCC 204508 / S288c) (Baker's yeast).